Here is a 446-residue protein sequence, read N- to C-terminus: Probable 1,4-beta-D-glucan cellobiohydrolase A (446 aa).

The N-terminal stretch at 1-17 (MYQRALLFSALLSVSRA) is a signal peptide. N-linked (GlcNAc...) asparagine glycosylation occurs at Asn-81. Glu-226 (nucleophile) is an active-site residue. Glu-231 acts as the Proton donor in catalysis. Residues Asn-284 and Asn-333 are each glycosylated (N-linked (GlcNAc...) asparagine). The interval 399-420 (TDADPSQPGVARGTCEQGAGDP) is disordered.

This sequence belongs to the glycosyl hydrolase 7 (cellulase C) family.

It is found in the secreted. It catalyses the reaction Hydrolysis of (1-&gt;4)-beta-D-glucosidic linkages in cellulose and cellotetraose, releasing cellobiose from the non-reducing ends of the chains.. In terms of biological role, the biological conversion of cellulose to glucose generally requires three types of hydrolytic enzymes: (1) Endoglucanases which cut internal beta-1,4-glucosidic bonds; (2) Exocellobiohydrolases that cut the disaccharide cellobiose from the non-reducing end of the cellulose polymer chain; (3) Beta-1,4-glucosidases which hydrolyze the cellobiose and other short cello-oligosaccharides to glucose. This is Probable 1,4-beta-D-glucan cellobiohydrolase A (cbhA) from Emericella nidulans (strain FGSC A4 / ATCC 38163 / CBS 112.46 / NRRL 194 / M139) (Aspergillus nidulans).